Consider the following 287-residue polypeptide: Polyamine aminopropyltransferase (287 aa).

A PABS domain is found at 5 to 238 (EIWYETLHAN…GIMTFAWASQ (234 aa)). Q33 is a binding site for S-methyl-5'-thioadenosine. Positions 64 and 88 each coordinate spermidine. Residues E108 and 140–141 (DG) each bind S-methyl-5'-thioadenosine. D158 acts as the Proton acceptor in catalysis. 158–161 (DCTD) is a binding site for spermidine. Position 165 (P165) interacts with S-methyl-5'-thioadenosine.

It belongs to the spermidine/spermine synthase family. In terms of assembly, homodimer or homotetramer.

Its subcellular location is the cytoplasm. The catalysed reaction is S-adenosyl 3-(methylsulfanyl)propylamine + putrescine = S-methyl-5'-thioadenosine + spermidine + H(+). It functions in the pathway amine and polyamine biosynthesis; spermidine biosynthesis; spermidine from putrescine: step 1/1. In terms of biological role, catalyzes the irreversible transfer of a propylamine group from the amino donor S-adenosylmethioninamine (decarboxy-AdoMet) to putrescine (1,4-diaminobutane) to yield spermidine. The sequence is that of Polyamine aminopropyltransferase from Serratia proteamaculans (strain 568).